A 245-amino-acid polypeptide reads, in one-letter code: Ribonuclease PH (245 aa).

Phosphate contacts are provided by residues arginine 86 and 124–126 (GTR).

Belongs to the RNase PH family. As to quaternary structure, homohexameric ring arranged as a trimer of dimers.

The catalysed reaction is tRNA(n+1) + phosphate = tRNA(n) + a ribonucleoside 5'-diphosphate. Phosphorolytic 3'-5' exoribonuclease that plays an important role in tRNA 3'-end maturation. Removes nucleotide residues following the 3'-CCA terminus of tRNAs; can also add nucleotides to the ends of RNA molecules by using nucleoside diphosphates as substrates, but this may not be physiologically important. Probably plays a role in initiation of 16S rRNA degradation (leading to ribosome degradation) during starvation. The chain is Ribonuclease PH from Bacillus cytotoxicus (strain DSM 22905 / CIP 110041 / 391-98 / NVH 391-98).